The primary structure comprises 526 residues: MGSSKSKPKDPSQRRHSLEPPDSTHHGGFPASQTPDETAAPDAHRNPSRSFGTVATEPKLFWGFNTSDTVTSPQRAGALAGGVTTFVALYDYESWTETDLSFKKGERLQIVNNTEGDWWLAHSLTTGQTGYIPSNYVAPSDSIQAEEWYFGKITRRESERLLLNPENPRGTFLVRKSETAKGAYCLSVSDFDNAKGPNVKHYKIYKLYSGGFYITSRTQFGSLQQLVAYYSKHADGLCHRLANVCPTSKPQTQGLAKDAWEIPRESLRLEAKLGQGCFGEVWMGTWNDTTRVAIKTLKPGTMSPEAFLQEAQVMKKLRHEKLVQLYAVVSEEPIYIVIEYMSKGSLLDFLKGEMGKYLRLPQLVDMAAQIASGMAYVERMNYVHRDLRAANILVGENLVCKVADFGLARLIEDNEYTARQGAKFPIKWTAPEAALYGRFTIKSDVWSFGILLTELTTKGRVPYPGMVNREVLDQVERGYRMPCPPECPESLHDLMCQCWRKDPEERPTFKYLQAQLLPACVLEVAE.

A disordered region spans residues 1–52; that stretch reads MGSSKSKPKDPSQRRHSLEPPDSTHHGGFPASQTPDETAAPDAHRNPSRSFG. The N-myristoyl glycine; by host moiety is linked to residue Gly-2. The segment covering 7–25 has biased composition (basic and acidic residues); that stretch reads KPKDPSQRRHSLEPPDSTH. SH3 domains are found at residues 71–139 and 81–142; these read TSPQ…YVAP and GGVT…PSDS. The SH2 domain maps to 148–245; that stretch reads WYFGKITRRE…GLCHRLANVC (98 aa). Residues 267-517 form the Protein kinase domain; it reads LRLEAKLGQG…TFKYLQAQLL (251 aa). Residues 273-281 and Lys-295 contribute to the ATP site; that span reads LGQGCFGEV. Asp-386 functions as the Proton acceptor in the catalytic mechanism. Tyr-416 is subject to Phosphotyrosine; by autocatalysis.

It belongs to the protein kinase superfamily. Tyr protein kinase family. SRC subfamily. Homodimer. Post-translationally, the phosphorylated form is termed pp60v-src.

The catalysed reaction is L-tyrosyl-[protein] + ATP = O-phospho-L-tyrosyl-[protein] + ADP + H(+). This phosphoprotein, required for both the initiation and the maintenance of neoplastic transformation, is a protein kinase that catalyzes the phosphorylation of tyrosine residues in vitro. In Gallus gallus (Chicken), this protein is Tyrosine-protein kinase transforming protein Src (V-SRC).